The chain runs to 476 residues: NADH-quinone oxidoreductase subunit N (476 aa).

A run of 14 helical transmembrane segments spans residues 8–28, 35–55, 71–91, 102–122, 124–144, 159–179, 201–221, 239–259, 267–287, 295–315, 322–342, 366–386, 405–425, and 437–457; these read ITTE…GLLV, GLGS…IINW, YATF…LGSF, FEYY…ASAG, FITL…LVAF, ILLA…VYGA, LIVG…AVPF, FLAV…FAGG, WTLL…LVAI, MLAY…VSAT, VMFY…VVAI, ASVM…AGFV, LGLI…LVMF, and VGGA…ILGI.

The protein belongs to the complex I subunit 2 family. In terms of assembly, NDH-1 is composed of 14 different subunits. Subunits NuoA, H, J, K, L, M, N constitute the membrane sector of the complex.

Its subcellular location is the cell membrane. It carries out the reaction a quinone + NADH + 5 H(+)(in) = a quinol + NAD(+) + 4 H(+)(out). In terms of biological role, NDH-1 shuttles electrons from NADH, via FMN and iron-sulfur (Fe-S) centers, to quinones in the respiratory chain. The immediate electron acceptor for the enzyme in this species is believed to be a menaquinone. Couples the redox reaction to proton translocation (for every two electrons transferred, four hydrogen ions are translocated across the cytoplasmic membrane), and thus conserves the redox energy in a proton gradient. The sequence is that of NADH-quinone oxidoreductase subunit N from Desulforamulus reducens (strain ATCC BAA-1160 / DSM 100696 / MI-1) (Desulfotomaculum reducens).